The chain runs to 346 residues: tRNA N6-adenosine threonylcarbamoyltransferase (346 aa).

Residues His-117 and His-121 each contribute to the Fe cation site. Substrate-binding positions include 139–143 (VVSGG), Asp-172, Gly-185, Asp-189, and Asn-278. Asp-307 serves as a coordination point for Fe cation.

The protein belongs to the KAE1 / TsaD family. In terms of assembly, may form a heterodimer with TsaB. The cofactor is Fe(2+).

The protein resides in the cytoplasm. The catalysed reaction is L-threonylcarbamoyladenylate + adenosine(37) in tRNA = N(6)-L-threonylcarbamoyladenosine(37) in tRNA + AMP + H(+). Its function is as follows. Required for the formation of a threonylcarbamoyl group on adenosine at position 37 (t(6)A37) in tRNAs that read codons beginning with adenine. Is involved in the transfer of the threonylcarbamoyl moiety of threonylcarbamoyl-AMP (TC-AMP) to the N6 group of A37, together with TsaE and TsaB; this reaction does not require ATP in vitro. TsaD likely plays a direct catalytic role in this reaction. The chain is tRNA N6-adenosine threonylcarbamoyltransferase from Bacillus subtilis (strain 168).